The sequence spans 29 residues: Potassium channel toxin alpha-KTx 8.3 (29 aa).

3 disulfides stabilise this stretch: Cys3/Cys19, Cys6/Cys24, and Cys10/Cys26.

It belongs to the short scorpion toxin superfamily. Potassium channel inhibitor family. Alpha-KTx 08 subfamily. In terms of tissue distribution, expressed by the venom gland.

It localises to the secreted. Functionally, specific and potent inhibitor of ClC-2/CLCN2 chloride channel. It slows ClC-2/CLCN2 activation by increasing the latency to first opening by nearly 8-fold but is unable to inhibit open channels, suggesting that this toxin inhibits channel activation gating. This is Potassium channel toxin alpha-KTx 8.3 from Leiurus hebraeus (Hebrew deathstalker scorpion).